The following is a 1375-amino-acid chain: Capping protein, Arp2/3 and myosin-I linker protein 3 (1375 aa).

The segment at 124 to 151 (IRRGNADTPEGPRDTSPNSETSTSTTHS) is disordered. Residues 138 to 151 (TSPNSETSTSTTHS) are compositionally biased toward low complexity. LRR repeat units follow at residues 244 to 264 (SLEE…QKLA), 274 to 295 (VLHA…SLSQ), 303 to 323 (GLTK…QALG), 335 to 357 (SLRY…NALY), 365 to 386 (ALVH…GALL), 392 to 413 (HLTY…EAPP), 424 to 444 (TLSH…RALL), 455 to 475 (DLHL…ALQE), 482 to 501 (CIGS…LTLV), and 509 to 530 (SLKH…EEIL). 2 disordered regions span residues 864 to 901 (RTLS…GTNI) and 969 to 1375 (KLRH…PGTD). Pro residues predominate over residues 981–997 (PRTTPPGPGRPSVPVPG). Positions 1007 to 1022 (RLDEGLEDFFSRRVMD) are enriched in basic and acidic residues. Residues 1047 to 1062 (QKKRRRGLFHFRRPRS) show a composition bias toward basic residues. Positions 1078 to 1097 (LPPPPPPPPTQESPPSPDPP) are enriched in pro residues. The span at 1098–1108 (SLGNNSSPCWS) shows a compositional bias: low complexity. The span at 1219 to 1229 (RRAEATWHIAE) shows a compositional bias: basic and acidic residues. Over residues 1233-1244 (ANHSCQSPSPAS) the composition is skewed to polar residues. Over residues 1272-1281 (PIGPRPPKPV) the composition is skewed to pro residues. The span at 1348–1360 (QSCDKLEPDRRQP) shows a compositional bias: basic and acidic residues.

The protein belongs to the CARMIL family.

It localises to the cytoplasm. The protein resides in the cell membrane. This chain is Capping protein, Arp2/3 and myosin-I linker protein 3 (Carmil3), found in Mus musculus (Mouse).